Here is a 641-residue protein sequence, read N- to C-terminus: Macrolide export ATP-binding/permease protein MacB (641 aa).

Positions 2-236 (IFLKNICKNI…LILKTMPKEK (235 aa)) constitute an ABC transporter domain. 34–41 (GQSGSGKT) contributes to the ATP binding site. 4 helical membrane-spanning segments follow: residues 265–285 (ILTM…VALG), 519–539 (ACVA…IMLV), 571–591 (MICT…IFAF), and 604–624 (AYSV…FGFF).

It belongs to the ABC transporter superfamily. Macrolide exporter (TC 3.A.1.122) family. As to quaternary structure, homodimer.

Its subcellular location is the cell inner membrane. Non-canonical ABC transporter that contains transmembrane domains (TMD), which form a pore in the inner membrane, and an ATP-binding domain (NBD), which is responsible for energy generation. Confers resistance against macrolides. This chain is Macrolide export ATP-binding/permease protein MacB, found in Campylobacter jejuni subsp. jejuni serotype O:2 (strain ATCC 700819 / NCTC 11168).